The following is a 260-amino-acid chain: MVLIRVLANLLILQLSYAQKSSELIIGGDECNINEHRFLVALYTFRSRRFHCGGTLINQEWVLSAARCDRKNIRIKLGMHSTNVTNEDVQTRVPKEKFFCLSSKTYTKWNKDIMLIRLKRPVNNSTHIAPVSLPSNPPSLGLVCRVMGWGTISATKETHPDVPHCANINILDYSVCRAAYARLPATSRTLCAGILEGGKDTCHGDSGGPLICNGQVQGIVSWGGHPCGQPRKPGLYTKVFDHLDWIKSIIAGNKDATCPP.

A signal peptide spans 1–18 (MVLIRVLANLLILQLSYA). The propeptide occupies 19–24 (QKSSEL). Positions 25–251 (IIGGDECNIN…HLDWIKSIIA (227 aa)) constitute a Peptidase S1 domain. 6 disulfides stabilise this stretch: Cys31–Cys165, Cys52–Cys68, Cys100–Cys258, Cys144–Cys212, Cys176–Cys191, and Cys202–Cys227. N-linked (GlcNAc...) asparagine glycosylation is found at Asn83, Asn123, and Asn124.

Belongs to the peptidase S1 family. Snake venom subfamily. Expressed by the venom gland.

The protein localises to the secreted. Snake venom serine protease homolog that may act in the hemostasis system of the prey. The polypeptide is Snake venom serine protease homolog KN7 (Trimeresurus stejnegeri (Chinese green tree viper)).